A 1267-amino-acid polypeptide reads, in one-letter code: RNA-directed RNA polymerase lambda-3 (1267 aa).

The RdRp catalytic domain occupies 555-792 (LSPTSGSAVI…KLYFIFGCRI (238 aa)).

This sequence belongs to the reoviridae RNA-directed RNA polymerase family.

The protein resides in the virion. The catalysed reaction is RNA(n) + a ribonucleoside 5'-triphosphate = RNA(n+1) + diphosphate. In terms of biological role, RNA-directed RNA polymerase that is involved in transcription and genome replication. Following infection, it catalyzes the synthesis of fully conservative plus strands. After core assembly, which consists in recruitment of one capped plus-strand for each genomic segments and polymerase complexes, the polymerase switches mode and catalyzes the synthesis of complementary minus-strands. The chain is RNA-directed RNA polymerase lambda-3 (L1) from Reovirus type 3 (strain Dearing) (T3D).